A 36-amino-acid polypeptide reads, in one-letter code: MSDIN-like toxin proprotein 10 (36 aa).

Positions 1-10 are excised as a propeptide; that stretch reads MSDINATRLP. A cross-link (cyclopeptide (Gly-Pro)) is located at residues 11–19; the sequence is GAYPPVPMP. A propeptide spanning residues 20–36 is cleaved from the precursor; the sequence is CVGDADNFTLTRGENLC.

The protein belongs to the MSDIN fungal toxin family. In terms of processing, processed by the macrocyclase-peptidase enzyme POPB to yield a toxic cyclic nonapeptide. POPB first removes 10 residues from the N-terminus. Conformational trapping of the remaining peptide forces the enzyme to release this intermediate rather than proceed to macrocyclization. The enzyme rebinds the remaining peptide in a different conformation and catalyzes macrocyclization of the N-terminal 9 residues.

Functionally, probable toxin that belongs to the MSDIN-like toxin family responsible for a large number of food poisoning cases and deaths. In Amanita bisporigera (Destroying angel), this protein is MSDIN-like toxin proprotein 10.